A 376-amino-acid polypeptide reads, in one-letter code: Lateral eye opsin (376 aa).

The Extracellular segment spans residues 1–46; the sequence is MANQLSYSSLGWPYQPNASVVDTMPKEMLYMIHEHWYAFPPMNPLW. N17 is a glycosylation site (N-linked (GlcNAc...) asparagine). The chain crosses the membrane as a helical span at residues 47-71; sequence YSILGVAMIILGIICVLGNGMVIYL. The Cytoplasmic segment spans residues 72 to 83; that stretch reads MMTTKSLRTPTN. The helical transmembrane segment at 84–108 threads the bilayer; that stretch reads LLVVNLAFSDFCMMAFMMPTMTSNC. Over 109-123 the chain is Extracellular; sequence FAETWILGPFMCEVY. C120 and C197 are joined by a disulfide. The helical transmembrane segment at 124 to 143 threads the bilayer; the sequence is GMAGSLFGCASIWSMVMITL. Topologically, residues 144–162 are cytoplasmic; that stretch reads DRYNVIVRGMAAAPLTHKK. The helical transmembrane segment at 163-186 threads the bilayer; that stretch reads ATLLLLFVWIWSGGWTILPFFGWS. Residues 187-210 are Extracellular-facing; that stretch reads RYVPEGNLTSCTVDYLTKDWSSAS. N193 carries an N-linked (GlcNAc...) asparagine glycan. Residues 211–238 form a helical membrane-spanning segment; sequence YVVIYGLAVYFLPLITMIYCYFFIVHAV. Residues 239–274 are Cytoplasmic-facing; the sequence is AEHEKQLREQAKKMNVASLRANADQQKQSAECRLAK. A helical transmembrane segment spans residues 275 to 298; that stretch reads VAMMTVGLWFMAWTPYLIISWAGV. The Extracellular portion of the chain corresponds to 299–306; that stretch reads FSSGTRLT. The chain crosses the membrane as a helical span at residues 307 to 331; it reads PLATIWGSVFAKANSCYNPIVYGIS. Residue K318 is modified to N6-(retinylidene)lysine. At 332 to 376 the chain is on the cytoplasmic side; the sequence is HPRYKAALYQRFPSLACGSGESGSDVKSEASATTTMEEKPKIPEA. A disordered region spans residues 349–376; the sequence is GSGESGSDVKSEASATTTMEEKPKIPEA. The segment covering 367–376 has biased composition (basic and acidic residues); the sequence is MEEKPKIPEA.

This sequence belongs to the G-protein coupled receptor 1 family. Opsin subfamily. In terms of processing, phosphorylated on some or all of the serine and threonine residues present in the C-terminal region. In terms of tissue distribution, lateral eye.

The protein resides in the membrane. Its function is as follows. Visual pigments are the light-absorbing molecules that mediate vision. They consist of an apoprotein, opsin, covalently linked to cis-retinal. This chain is Lateral eye opsin, found in Limulus polyphemus (Atlantic horseshoe crab).